We begin with the raw amino-acid sequence, 199 residues long: Recombination protein RecR (199 aa).

The segment at 58–73 adopts a C4-type zinc-finger fold; it reads CSICNNITDVDPCTYC. Positions 81 to 176 constitute a Toprim domain; the sequence is QVICVVEEPT…RVTRIATGVP (96 aa).

This sequence belongs to the RecR family.

In terms of biological role, may play a role in DNA repair. It seems to be involved in an RecBC-independent recombinational process of DNA repair. It may act with RecF and RecO. In Koribacter versatilis (strain Ellin345), this protein is Recombination protein RecR.